Reading from the N-terminus, the 117-residue chain is Anti-sigma F factor antagonist (117 aa).

The region spanning 3–113 (LGIDMNVKES…QSEQQALLTL (111 aa)) is the STAS domain. Position 58 is a phosphoserine (Ser-58).

Belongs to the anti-sigma-factor antagonist family. In terms of processing, phosphorylated by SpoIIAB on a serine residue.

Its function is as follows. In the phosphorylated form it could act as an anti-anti-sigma factor that counteracts SpoIIAB and thus releases sigma f from inhibition. The chain is Anti-sigma F factor antagonist (spoIIAA) from Bacillus subtilis (strain 168).